A 309-amino-acid chain; its full sequence is Aspartate carbamoyltransferase catalytic subunit (309 aa).

Residues Arg55 and Thr56 each contribute to the carbamoyl phosphate site. Residue Lys85 participates in L-aspartate binding. Positions 106, 135, and 138 each coordinate carbamoyl phosphate. The L-aspartate site is built by Arg168 and Arg230. The carbamoyl phosphate site is built by Leu268 and Pro269.

This sequence belongs to the aspartate/ornithine carbamoyltransferase superfamily. ATCase family. As to quaternary structure, heterododecamer (2C3:3R2) of six catalytic PyrB chains organized as two trimers (C3), and six regulatory PyrI chains organized as three dimers (R2).

It catalyses the reaction carbamoyl phosphate + L-aspartate = N-carbamoyl-L-aspartate + phosphate + H(+). It participates in pyrimidine metabolism; UMP biosynthesis via de novo pathway; (S)-dihydroorotate from bicarbonate: step 2/3. Its function is as follows. Catalyzes the condensation of carbamoyl phosphate and aspartate to form carbamoyl aspartate and inorganic phosphate, the committed step in the de novo pyrimidine nucleotide biosynthesis pathway. This Aliivibrio fischeri (strain MJ11) (Vibrio fischeri) protein is Aspartate carbamoyltransferase catalytic subunit.